The primary structure comprises 104 residues: Putative thioredoxin-4 (104 aa).

The Thioredoxin domain occupies 2–104; the sequence is SKVTNVSINT…QLRKILDSMK (103 aa). Active-site nucleophile residues include cysteine 31 and cysteine 34. Cysteines 31 and 34 form a disulfide.

The protein belongs to the thioredoxin family.

Its function is as follows. Participates in various redox reactions through the reversible oxidation of its active center dithiol to a disulfide and catalyzes dithiol-disulfide exchange reactions. The protein is Putative thioredoxin-4 (trxD) of Dictyostelium discoideum (Social amoeba).